The chain runs to 302 residues: Nucleoside kinase (302 aa).

The substrate site is built by Asp17, Gln33, Gly43, and Asn47. Gln109 lines the ATP pocket. Residues 111 to 113 and Gln163 contribute to the substrate site; that span reads TFF. ATP-binding positions include Asn186 and 214–219; that span reads TKGSKG. Asp247 contributes to the substrate binding site. Asp247 acts as the Proton acceptor in catalysis.

As to quaternary structure, homodimer. Requires Mg(2+) as cofactor. The cofactor is Mn(2+).

The catalysed reaction is cytidine + ATP = CMP + ADP + H(+). It carries out the reaction guanosine + ATP = GMP + ADP + H(+). It catalyses the reaction inosine + ATP = IMP + ADP + H(+). In terms of biological role, catalyzes the phosphorylation of a wide range of nucleosides to yield nucleoside monophosphates. Shows the highest activity for inosine, guanosine and cytidine, but very poor kinase activity with adenosine, thymidine, uridine and xanthosine. ATP is the best phosphate donor, but can also use ITP and GTP. Shows extremely low activity with fructose-6-phosphate. This Methanocaldococcus jannaschii (strain ATCC 43067 / DSM 2661 / JAL-1 / JCM 10045 / NBRC 100440) (Methanococcus jannaschii) protein is Nucleoside kinase.